A 273-amino-acid chain; its full sequence is Dermonecrotic toxin SdSicTox-betaIF1 (273 aa).

H5 is a catalytic residue. Residues E25 and D27 each contribute to the Mg(2+) site. H41 acts as the Nucleophile in catalysis. 2 cysteine pairs are disulfide-bonded: C45–C51 and C47–C189.

The protein belongs to the arthropod phospholipase D family. Class II subfamily. Mg(2+) is required as a cofactor. Expressed by the venom gland.

Its subcellular location is the secreted. It carries out the reaction an N-(acyl)-sphingosylphosphocholine = an N-(acyl)-sphingosyl-1,3-cyclic phosphate + choline. The catalysed reaction is an N-(acyl)-sphingosylphosphoethanolamine = an N-(acyl)-sphingosyl-1,3-cyclic phosphate + ethanolamine. It catalyses the reaction a 1-acyl-sn-glycero-3-phosphocholine = a 1-acyl-sn-glycero-2,3-cyclic phosphate + choline. The enzyme catalyses a 1-acyl-sn-glycero-3-phosphoethanolamine = a 1-acyl-sn-glycero-2,3-cyclic phosphate + ethanolamine. Its function is as follows. Dermonecrotic toxins cleave the phosphodiester linkage between the phosphate and headgroup of certain phospholipids (sphingolipid and lysolipid substrates), forming an alcohol (often choline) and a cyclic phosphate. This toxin acts on sphingomyelin (SM). It may also act on ceramide phosphoethanolamine (CPE), lysophosphatidylcholine (LPC) and lysophosphatidylethanolamine (LPE), but not on lysophosphatidylserine (LPS), and lysophosphatidylglycerol (LPG). It acts by transphosphatidylation, releasing exclusively cyclic phosphate products as second products. Induces dermonecrosis, hemolysis, increased vascular permeability, edema, inflammatory response, and platelet aggregation. The polypeptide is Dermonecrotic toxin SdSicTox-betaIF1 (Sicarius cf. damarensis (strain GJB-2008) (Six-eyed sand spider)).